The sequence spans 46 residues: AVYVASPYAAGYGYAYPYAAAAYRAAPVVGAYAAYPYGVATYPYYY.

Component of the cuticle of migratory locust which contains more than 100 different structural proteins. This Locusta migratoria (Migratory locust) protein is Cuticle protein 4.9.